The chain runs to 347 residues: Coproporphyrinogen-III oxidase, aerobic 2 (347 aa).

The interval 1–31 is disordered; it reads MGRHSDNSLQESANHTVLLTSPTNTIPKDSR. A compositionally biased stretch (polar residues) spans 7–31; it reads NSLQESANHTVLLTSPTNTIPKDSR. The interval 75–84 is important for dimerization; that stretch reads VIREGRVFEQ. Substrate is bound at residue Ser-119. Catalysis depends on His-133, which acts as the Proton donor. Residues 135–137 and 305–310 each bind substrate; these read NYR and KGRTES. The tract at residues 287–322 is important for dimerization; the sequence is YVEFNLVYDRGTVFGLQTKGRTESILMSLPPLARWE.

This sequence belongs to the aerobic coproporphyrinogen-III oxidase family. In terms of assembly, homodimer.

Its subcellular location is the cytoplasm. It catalyses the reaction coproporphyrinogen III + O2 + 2 H(+) = protoporphyrinogen IX + 2 CO2 + 2 H2O. It functions in the pathway porphyrin-containing compound metabolism; protoporphyrin-IX biosynthesis; protoporphyrinogen-IX from coproporphyrinogen-III (O2 route): step 1/1. Key enzyme in heme biosynthesis. Catalyzes the oxidative decarboxylation of propionic acid side chains of rings A and B of coproporphyrinogen III. This chain is Coproporphyrinogen-III oxidase, aerobic 2, found in Nostoc sp. (strain PCC 7120 / SAG 25.82 / UTEX 2576).